Here is a 410-residue protein sequence, read N- to C-terminus: Probable serine/threonine-protein kinase PBL9 (410 aa).

Residue Gly2 is the site of N-myristoyl glycine attachment. Cys4 is lipidated: S-palmitoyl cysteine. The segment at 11–46 (AESSGASTKYDAKDIGSLGSKASSVSVRPSPRTEGE) is disordered. The Protein kinase domain occupies 68–352 (FRPDSVLGEG…MSEVVSHLEH (285 aa)). ATP-binding positions include 74 to 82 (LGEGGFGCV) and Lys106. Tyr151 carries the post-translational modification Phosphotyrosine. Asp203 acts as the Proton acceptor in catalysis. Ser207 and Ser237 each carry phosphoserine. Residues Thr238 and Thr243 each carry the phosphothreonine modification. Tyr251 carries the phosphotyrosine modification.

This sequence belongs to the protein kinase superfamily. Ser/Thr protein kinase family. In terms of assembly, interacts with the Xanthomonas campestris effector XopAC/AvrAC. In terms of tissue distribution, expressed in stomatal guard cells of leaves.

The protein localises to the cell membrane. It catalyses the reaction L-seryl-[protein] + ATP = O-phospho-L-seryl-[protein] + ADP + H(+). It carries out the reaction L-threonyl-[protein] + ATP = O-phospho-L-threonyl-[protein] + ADP + H(+). In terms of biological role, possible bi-functional kinase. In vitro, it exhibits serine/threonine activity. In vivo, can phosphorylate tyrosine residues of limited substrates. May be involved in plant defense signaling. This chain is Probable serine/threonine-protein kinase PBL9, found in Arabidopsis thaliana (Mouse-ear cress).